A 248-amino-acid polypeptide reads, in one-letter code: Small ribosomal subunit protein uS2 (248 aa).

The protein belongs to the universal ribosomal protein uS2 family.

This chain is Small ribosomal subunit protein uS2, found in Alkalilimnicola ehrlichii (strain ATCC BAA-1101 / DSM 17681 / MLHE-1).